The following is a 607-amino-acid chain: Chaperone protein DnaK (607 aa).

T173 carries the phosphothreonine; by autocatalysis modification. Over residues 577–588 (AQAQQGAEGAAS) the composition is skewed to low complexity. The segment at 577–607 (AQAQQGAEGAASQDDDVVDADFTEVKDDDNK) is disordered. A compositionally biased stretch (acidic residues) spans 589–598 (QDDDVVDADF).

Belongs to the heat shock protein 70 family.

In terms of biological role, acts as a chaperone. The protein is Chaperone protein DnaK of Macrococcus caseolyticus (strain JCSC5402) (Macrococcoides caseolyticum).